The primary structure comprises 303 residues: Pycsar effector protein XpPycTIR (303 aa).

14–138 contributes to the a nucleoside 3',5'-cyclic phosphate binding site; sequence LVATLTEHRL…RRIAATLARR (125 aa). Residues 154-273 form a TIR-like region; it reads RVFIMSSVEA…DLAGLTTIPY (120 aa).

It localises to the cytoplasm. It carries out the reaction NAD(+) + H2O = ADP-D-ribose + nicotinamide + H(+). In terms of biological role, pycsar (pyrimidine cyclase system for antiphage resistance) provides immunity against bacteriophage. The pyrimidine cyclase (PycC) synthesizes cyclic nucleotides in response to infection; these serve as specific second messenger signals. The signals activate the adjacent effector, leading to bacterial cell death and abortive phage infection. A clade B Pycsar system. The effector gene of a two-gene Pycsar system. Expression of this and adjacent uridylate cyclase XpPycC (AC P0DV28) confers resistance to bacteriophage T7. When cells expressing the Pycsar system are infected by phage T7 at low multiplicity of infection (0.2 MOI) the culture survivey, at 2.0 MOI bacteria enter growth arrest. The same cells enter growth arrest after exposure to 2.5 mM cUMP but not cCMP; the effector protein responds only to the cUMP usually produced by its cognate NTP cyclase. NAD(+) levels in infected cells are depleted between 5 and 10 minutes after infection with T7 at MOI of 2. Probably only responds to cUMP. The chain is Pycsar effector protein XpPycTIR from Xanthomonas perforans.